Reading from the N-terminus, the 153-residue chain is ORM1-like protein 1 (153 aa).

At 1–26 the chain is on the cytoplasmic side; sequence MNVGVAHSEVNPNTRVMNSRGMWLTY. Helical transmembrane passes span 27 to 46 and 47 to 67; these read ALGV…FSVP and VAWT…LHAV. The Cytoplasmic segment spans residues 68 to 100; it reads KGTPFETPDQGKARLLTHWEQLDYGVQFTSSRK. The helical transmembrane segment at 101–121 threads the bilayer; the sequence is FLTISPIILYFLASFYTKYDP. Residues 122-123 lie on the Extracellular side of the membrane; sequence TH. A helical transmembrane segment spans residues 124–144; sequence FFINTASLLSVLIPKLPQLHG. Over 145-153 the chain is Cytoplasmic; that stretch reads VRIFGINKY.

This sequence belongs to the ORM family. Ceramide-sensitive subunit of the serine palmitoyltransferase (SPT) complex, which is also composed of SPTLC1, SPTLC2/3 and SPTSSA/B.

The protein localises to the endoplasmic reticulum membrane. Plays an essential role in the homeostatic regulation of sphingolipid de novo biosynthesis by modulating the activity of the serine palmitoyltransferase (SPT) in response to ceramide levels. When complexed to SPT, the binding of ceramides to its N-terminus stabilizes a conformation that block SPT substrate entry, hence preventing SPT catalytic activity. Through this mechanism, maintains ceramide levels at sufficient concentrations for the production of complex sphingolipids, but which prevents the accumulation of ceramides to levels that trigger apoptosis. The polypeptide is ORM1-like protein 1 (ormdl1) (Xenopus laevis (African clawed frog)).